The following is a 927-amino-acid chain: MAKGKYDGTLNLPQTGFPMRANLPQREPEILKFWDEIDIYRRIQEKNAGRPQFILHDGPPYANGNIHLGHTLNKVLKDIIVKYRSMSGYDSPYIPGWDTHGLPIEQQAIKNLGIDRHKTDVVEFREHCRDYALKYVEIQKEQFKRLGVRGDWEDPYLTLSPGFESIQIKVFGEMAKKGFIYKGLKPVYWCGDCETALAEAEVEYNEKVSPSIYVKFPVKDGKGVLPEDAFVIIWTTTPWTLPANTGICLHPGFDYVLLEVKGEKYLLAQGLLEAVAGELGWDNYQILDKYKGEELERVICHHPFFARDSLLVLGEHVTLEAGTGCVHTAPGHGEDDFHVGQEYGLEVISPVDDRGRFTAEAEKFQGLYVHDANKAVIEELEKRNMLLKAASIEHQYPYCWRCKQPIIYRATEQWFASIDGFRQDALNAIDTVKWIPSWGRDRIFNMIRDRGDWCISRQRTWGVPIPIFYCESCGEALINDETIQRVSELFAANGSDIWFAKTAAELMPPGCSCEHCGGSTFRKESDIMDVWFDSGSSHMAVLEPRQELRWPSDMYLEGSDQHRGWFNSSLSTAVAIRGAAPYREVLTHGFVVDEQGRKMSKSLGNVVDPLRMTREMGADILRLWVSSADYRNDVSVSPNIIKQSAEAYRKIRNTCRFILGNLFDFDPGKERVSYDKLSELDQWALLKLDKLIRRVTKAYEDYEFHVVFHSMHNFCTVDLSNIYFDILKDKLYCSHPQDAERKAAQTVLYDIINALVVMLTPILAFSSEEIWSYLKKEGQAESVQLLEWPQANDEYLNQAIENRMSRVLELREVVTKALEEARSKKVIGHSLGAWITIYASPEWTELLKATAGLEKIFIVSRAELKPETEAPAEALALEGVEGIRVMVQAAEGSKCERCWIIENSVGEDLKHPTLCQRCAEVVAQLQG.

A 'HIGH' region motif is present at residues 60 to 70 (PYANGNIHLGH). Glutamate 557 lines the L-isoleucyl-5'-AMP pocket. The 'KMSKS' region motif lies at 598 to 602 (KMSKS). Lysine 601 provides a ligand contact to ATP. Zn(2+) contacts are provided by cysteine 895, cysteine 898, cysteine 915, and cysteine 918.

Belongs to the class-I aminoacyl-tRNA synthetase family. IleS type 1 subfamily. As to quaternary structure, monomer. Requires Zn(2+) as cofactor.

It is found in the cytoplasm. The enzyme catalyses tRNA(Ile) + L-isoleucine + ATP = L-isoleucyl-tRNA(Ile) + AMP + diphosphate. Catalyzes the attachment of isoleucine to tRNA(Ile). As IleRS can inadvertently accommodate and process structurally similar amino acids such as valine, to avoid such errors it has two additional distinct tRNA(Ile)-dependent editing activities. One activity is designated as 'pretransfer' editing and involves the hydrolysis of activated Val-AMP. The other activity is designated 'posttransfer' editing and involves deacylation of mischarged Val-tRNA(Ile). This chain is Isoleucine--tRNA ligase, found in Syntrophomonas wolfei subsp. wolfei (strain DSM 2245B / Goettingen).